We begin with the raw amino-acid sequence, 158 residues long: NADH-quinone oxidoreductase subunit B (158 aa).

The [4Fe-4S] cluster site is built by C36, C37, C101, and C131.

The protein belongs to the complex I 20 kDa subunit family. NDH-1 is composed of 14 different subunits. Subunits NuoB, C, D, E, F, and G constitute the peripheral sector of the complex. It depends on [4Fe-4S] cluster as a cofactor.

It is found in the cell inner membrane. It carries out the reaction a quinone + NADH + 5 H(+)(in) = a quinol + NAD(+) + 4 H(+)(out). In terms of biological role, NDH-1 shuttles electrons from NADH, via FMN and iron-sulfur (Fe-S) centers, to quinones in the respiratory chain. The immediate electron acceptor for the enzyme in this species is believed to be ubiquinone. Couples the redox reaction to proton translocation (for every two electrons transferred, four hydrogen ions are translocated across the cytoplasmic membrane), and thus conserves the redox energy in a proton gradient. This Francisella tularensis subsp. tularensis (strain FSC 198) protein is NADH-quinone oxidoreductase subunit B.